Reading from the N-terminus, the 555-residue chain is CTP synthase (555 aa).

An amidoligase domain region spans residues 1–265 (MTRYIFITGG…GNRVCEKLNI (265 aa)). Ser-13 is a CTP binding site. Ser-13 provides a ligand contact to UTP. ATP contacts are provided by residues 14–19 (SLGKGI) and Asp-71. Residues Asp-71 and Glu-139 each contribute to the Mg(2+) site. CTP-binding positions include 146–148 (DIE), 186–191 (KTKPTQ), and Lys-222. Residues 186 to 191 (KTKPTQ) and Lys-222 each bind UTP. A Glutamine amidotransferase type-1 domain is found at 290 to 541 (TVAVVGKYVD…IKAGLAAKEA (252 aa)). Residue Gly-351 coordinates L-glutamine. The Nucleophile; for glutamine hydrolysis role is filled by Cys-378. L-glutamine-binding positions include 379 to 382 (LGMQ), Glu-402, and Arg-469. Catalysis depends on residues His-514 and Glu-516.

It belongs to the CTP synthase family. Homotetramer.

It carries out the reaction UTP + L-glutamine + ATP + H2O = CTP + L-glutamate + ADP + phosphate + 2 H(+). The enzyme catalyses L-glutamine + H2O = L-glutamate + NH4(+). The catalysed reaction is UTP + NH4(+) + ATP = CTP + ADP + phosphate + 2 H(+). Its pathway is pyrimidine metabolism; CTP biosynthesis via de novo pathway; CTP from UDP: step 2/2. Its activity is regulated as follows. Allosterically activated by GTP, when glutamine is the substrate; GTP has no effect on the reaction when ammonia is the substrate. The allosteric effector GTP functions by stabilizing the protein conformation that binds the tetrahedral intermediate(s) formed during glutamine hydrolysis. Inhibited by the product CTP, via allosteric rather than competitive inhibition. Functionally, catalyzes the ATP-dependent amination of UTP to CTP with either L-glutamine or ammonia as the source of nitrogen. Regulates intracellular CTP levels through interactions with the four ribonucleotide triphosphates. This is CTP synthase from Coxiella burnetii (strain RSA 493 / Nine Mile phase I).